The primary structure comprises 385 residues: 1-deoxy-D-xylulose 5-phosphate reductoisomerase (385 aa).

NADPH contacts are provided by T10, G11, S12, I13, K37, and N124. 1-deoxy-D-xylulose 5-phosphate is bound at residue K125. E126 provides a ligand contact to NADPH. Mn(2+) is bound at residue D150. 4 residues coordinate 1-deoxy-D-xylulose 5-phosphate: S151, E152, S176, and H199. E152 contributes to the Mn(2+) binding site. G205 is a binding site for NADPH. 1-deoxy-D-xylulose 5-phosphate is bound by residues S212, N217, K218, and E221. E221 contacts Mn(2+).

The protein belongs to the DXR family. Requires Mg(2+) as cofactor. It depends on Mn(2+) as a cofactor.

It catalyses the reaction 2-C-methyl-D-erythritol 4-phosphate + NADP(+) = 1-deoxy-D-xylulose 5-phosphate + NADPH + H(+). The protein operates within isoprenoid biosynthesis; isopentenyl diphosphate biosynthesis via DXP pathway; isopentenyl diphosphate from 1-deoxy-D-xylulose 5-phosphate: step 1/6. In terms of biological role, catalyzes the NADPH-dependent rearrangement and reduction of 1-deoxy-D-xylulose-5-phosphate (DXP) to 2-C-methyl-D-erythritol 4-phosphate (MEP). In Clostridium novyi (strain NT), this protein is 1-deoxy-D-xylulose 5-phosphate reductoisomerase.